A 127-amino-acid chain; its full sequence is Small ribosomal subunit protein uS11 (127 aa).

This sequence belongs to the universal ribosomal protein uS11 family. In terms of assembly, part of the 30S ribosomal subunit. Interacts with proteins S7 and S18. Binds to IF-3.

Functionally, located on the platform of the 30S subunit, it bridges several disparate RNA helices of the 16S rRNA. Forms part of the Shine-Dalgarno cleft in the 70S ribosome. The chain is Small ribosomal subunit protein uS11 from Chlorobaculum parvum (strain DSM 263 / NCIMB 8327) (Chlorobium vibrioforme subsp. thiosulfatophilum).